The following is a 1664-amino-acid chain: Peroxisome proliferator-activated receptor gamma coactivator-related protein 1 (1664 aa).

7 disordered regions span residues 1–44, 167–255, 436–555, 681–701, 735–793, 818–873, and 1045–1068; these read MAAR…GTLG, LLTL…VASF, PVVP…EGPL, VDPV…VSSA, IESG…ADIP, CLVP…PTPP, and HGAP…HPKH. Pro residues predominate over residues 12–22; it reads APPPSGGPGPD. Positions 23–32 are enriched in gly residues; it reads PGGGARGSGW. Low complexity predominate over residues 201–224; the sequence is SLPDPSWDFSPPSFLETSSPKLPS. The residue at position 237 (Ser-237) is a Phosphoserine. Residues 433-467 are necessary for interaction with CREB1 and NRF1 and for transcriptional coactivation; that stretch reads VVEPVVPKEPQNPPANAAPGSQRARKGRKKKSKEQ. A compositionally biased stretch (basic residues) spans 455 to 464; that stretch reads RARKGRKKKS. A compositionally biased stretch (polar residues) spans 482–499; sequence SSRGQSTVGTEVTSQVDN. Residues 522–531 show a composition bias toward low complexity; that stretch reads RAWARAWAAA. A compositionally biased stretch (polar residues) spans 533–549; the sequence is ENSSPKNLERSAGQSSP. A phosphoserine mark is found at Ser-536 and Ser-548. The span at 823 to 836 shows a compositional bias: pro residues; it reads GPSPASPSPEPPVS. Residues 862 to 873 show a composition bias toward low complexity; sequence VQSVSPAVPTPP. Residue Ser-1076 is modified to Phosphoserine. 3 disordered regions span residues 1093–1130, 1182–1209, and 1334–1528; these read EEPA…STVP, SEAK…DIPQ, and VLSL…DHYQ. The span at 1096-1113 shows a compositional bias: basic and acidic residues; sequence ASERLKPETQETRPREKP. Over residues 1365 to 1383 the composition is skewed to low complexity; that stretch reads PSAPCLAPSSLLSPEASPC. Residues 1379–1450 form a necessary for interaction with CREB1 and NRF1 region; it reads EASPCRNDMN…SSSSSSSSSS (72 aa). Residues 1400–1409 are compositionally biased toward basic residues; it reads RSMRCYRKAC. Phosphoserine occurs at positions 1411 and 1413. 2 stretches are compositionally biased toward low complexity: residues 1427-1459 and 1468-1500; these read SRSV…RSLS and SSCS…SSSR. The span at 1501–1519 shows a compositional bias: basic residues; the sequence is SRSRSPSPRRRSDRRRRYS. Residues 1543–1619 form the RRM domain; that stretch reads RVVFIGKIPG…QPFDLCFGGR (77 aa).

As to quaternary structure, interacts with CREB1 and NRF1. In terms of tissue distribution, strongly expressed in heart and skeletal muscle, moderately in lung, placenta, intestine, liver, kidney, spleen, thymus, colon and brain. Also expressed in several oncocytic thyroid tumors.

It is found in the nucleus. Functionally, acts as a coactivator during transcriptional activation of nuclear genes related to mitochondrial biogenesis and cell growth. Involved in the transcription coactivation of CREB and NRF1 target genes. This is Peroxisome proliferator-activated receptor gamma coactivator-related protein 1 (PPRC1) from Homo sapiens (Human).